Reading from the N-terminus, the 130-residue chain is UPF0225 protein DR_0483 (130 aa).

This sequence belongs to the UPF0225 family.

The chain is UPF0225 protein DR_0483 from Deinococcus radiodurans (strain ATCC 13939 / DSM 20539 / JCM 16871 / CCUG 27074 / LMG 4051 / NBRC 15346 / NCIMB 9279 / VKM B-1422 / R1).